A 148-amino-acid chain; its full sequence is Aspartate 1-decarboxylase (148 aa).

Serine 25 (schiff-base intermediate with substrate; via pyruvic acid) is an active-site residue. Serine 25 bears the Pyruvic acid (Ser) mark. Threonine 57 is a binding site for substrate. Tyrosine 58 acts as the Proton donor in catalysis. 73–75 (GAA) serves as a coordination point for substrate.

It belongs to the PanD family. Heterooctamer of four alpha and four beta subunits. The cofactor is pyruvate. Is synthesized initially as an inactive proenzyme, which is activated by self-cleavage at a specific serine bond to produce a beta-subunit with a hydroxyl group at its C-terminus and an alpha-subunit with a pyruvoyl group at its N-terminus.

It localises to the cytoplasm. The catalysed reaction is L-aspartate + H(+) = beta-alanine + CO2. Its pathway is cofactor biosynthesis; (R)-pantothenate biosynthesis; beta-alanine from L-aspartate: step 1/1. Its function is as follows. Catalyzes the pyruvoyl-dependent decarboxylation of aspartate to produce beta-alanine. The sequence is that of Aspartate 1-decarboxylase from Rhodococcus opacus (strain B4).